Reading from the N-terminus, the 207-residue chain is Claudin-11 (207 aa).

A topological domain (cytoplasmic) is located at residue methionine 1. The chain crosses the membrane as a helical span at residues 2 to 22 (VATCLQVVGFVTSFVGWIGVI). The Extracellular segment spans residues 23-82 (VTTSTNDWVVTCGYTIPTCRKLDELGSKGLWADCVMATGLYHCKPLVDILILPGYVQACR). A helical transmembrane segment spans residues 83-103 (ALMIAASVLGLPAILLLLTVL). The Cytoplasmic segment spans residues 104-122 (PCIRMGQEPGVAKYRRAQL). Residues 123–143 (AGVLLILLALCALVATIWFPV) form a helical membrane-spanning segment. The Extracellular portion of the chain corresponds to 144–157 (CAHRETTIVSFGYS). Residues 158–178 (LYAGWIGAVLCLVGGCVILCC) form a helical membrane-spanning segment. Residues 179–207 (AGDAQAFGENRFYYTAGSSSPTHAKSAHV) lie on the Cytoplasmic side of the membrane. Serine 197 and serine 198 each carry phosphoserine.

It belongs to the claudin family. In terms of assembly, interacts with tetraspanin-3/TSPAN3. Interacts with OCLN.

It localises to the cell junction. It is found in the tight junction. The protein localises to the cell membrane. Functionally, plays a major role in tight junction-specific obliteration of the intercellular space, through calcium-independent cell-adhesion activity. The polypeptide is Claudin-11 (CLDN11) (Homo sapiens (Human)).